Reading from the N-terminus, the 141-residue chain is Large ribosomal subunit protein uL11 (141 aa).

Belongs to the universal ribosomal protein uL11 family. Part of the ribosomal stalk of the 50S ribosomal subunit. Interacts with L10 and the large rRNA to form the base of the stalk. L10 forms an elongated spine to which L12 dimers bind in a sequential fashion forming a multimeric L10(L12)X complex. In terms of processing, one or more lysine residues are methylated.

Its function is as follows. Forms part of the ribosomal stalk which helps the ribosome interact with GTP-bound translation factors. The chain is Large ribosomal subunit protein uL11 from Selenomonas ruminantium.